Consider the following 377-residue polypeptide: Anhydro-N-acetylmuramic acid kinase (377 aa).

ATP is bound at residue 12–19 (GTSLDGID).

Belongs to the anhydro-N-acetylmuramic acid kinase family.

It catalyses the reaction 1,6-anhydro-N-acetyl-beta-muramate + ATP + H2O = N-acetyl-D-muramate 6-phosphate + ADP + H(+). Its pathway is amino-sugar metabolism; 1,6-anhydro-N-acetylmuramate degradation. It functions in the pathway cell wall biogenesis; peptidoglycan recycling. Functionally, catalyzes the specific phosphorylation of 1,6-anhydro-N-acetylmuramic acid (anhMurNAc) with the simultaneous cleavage of the 1,6-anhydro ring, generating MurNAc-6-P. Is required for the utilization of anhMurNAc either imported from the medium or derived from its own cell wall murein, and thus plays a role in cell wall recycling. This is Anhydro-N-acetylmuramic acid kinase from Methylorubrum extorquens (strain CM4 / NCIMB 13688) (Methylobacterium extorquens).